The chain runs to 490 residues: GTPase Der (490 aa).

2 consecutive EngA-type G domains span residues 3 to 166 (PVVA…MDDV) and 203 to 376 (IKLA…DSST). GTP contacts are provided by residues 9-16 (GRPNVGKS), 56-60 (DTGGI), 118-121 (NKTD), 209-216 (GRPNVGKS), 256-260 (DTAGV), and 321-324 (NKWD). The 85-residue stretch at 377-461 (RRVSTAMLTR…PIRIQFKEGE (85 aa)) folds into the KH-like domain.

It belongs to the TRAFAC class TrmE-Era-EngA-EngB-Septin-like GTPase superfamily. EngA (Der) GTPase family. Associates with the 50S ribosomal subunit.

GTPase that plays an essential role in the late steps of ribosome biogenesis. In Citrobacter koseri (strain ATCC BAA-895 / CDC 4225-83 / SGSC4696), this protein is GTPase Der.